The primary structure comprises 404 residues: RNA exonuclease 3 (404 aa).

In terms of domain architecture, Exonuclease spans Val243–Val389.

This sequence belongs to the REXO1/REXO3 family.

It is found in the cytoplasm. It localises to the nucleus. Functionally, 3' to 5' exoribonuclease required for proper 3' end maturation of MRP RNA and of the U5L snRNA. The polypeptide is RNA exonuclease 3 (REX3) (Saccharomyces cerevisiae (strain ATCC 204508 / S288c) (Baker's yeast)).